The following is a 192-amino-acid chain: Xanthine phosphoribosyltransferase (192 aa).

Residues leucine 20 and asparagine 27 each contribute to the xanthine site. 5-phospho-alpha-D-ribose 1-diphosphate is bound at residue 128–132 (ANGDA). Lysine 156 contributes to the xanthine binding site.

Belongs to the purine/pyrimidine phosphoribosyltransferase family. Xpt subfamily. As to quaternary structure, homodimer.

Its subcellular location is the cytoplasm. The catalysed reaction is XMP + diphosphate = xanthine + 5-phospho-alpha-D-ribose 1-diphosphate. Its pathway is purine metabolism; XMP biosynthesis via salvage pathway; XMP from xanthine: step 1/1. In terms of biological role, converts the preformed base xanthine, a product of nucleic acid breakdown, to xanthosine 5'-monophosphate (XMP), so it can be reused for RNA or DNA synthesis. The chain is Xanthine phosphoribosyltransferase from Staphylococcus aureus (strain JH1).